A 451-amino-acid chain; its full sequence is tRNA modification GTPase MnmE (451 aa).

Residues arginine 28, glutamate 85, and lysine 124 each coordinate (6S)-5-formyl-5,6,7,8-tetrahydrofolate. Residues 220-377 (GMNVVLVGQP…LRSELLRVAG (158 aa)) form the TrmE-type G domain. Asparagine 230 contributes to the K(+) binding site. Residues 230–235 (NVGKSS), 249–255 (TDIAGTT), and 274–277 (DTAG) contribute to the GTP site. A Mg(2+)-binding site is contributed by serine 234. Residues threonine 249, isoleucine 251, and threonine 254 each coordinate K(+). A Mg(2+)-binding site is contributed by threonine 255. (6S)-5-formyl-5,6,7,8-tetrahydrofolate is bound at residue lysine 451.

Belongs to the TRAFAC class TrmE-Era-EngA-EngB-Septin-like GTPase superfamily. TrmE GTPase family. As to quaternary structure, homodimer. Heterotetramer of two MnmE and two MnmG subunits. Requires K(+) as cofactor.

Its subcellular location is the cytoplasm. Functionally, exhibits a very high intrinsic GTPase hydrolysis rate. Involved in the addition of a carboxymethylaminomethyl (cmnm) group at the wobble position (U34) of certain tRNAs, forming tRNA-cmnm(5)s(2)U34. This chain is tRNA modification GTPase MnmE, found in Aromatoleum aromaticum (strain DSM 19018 / LMG 30748 / EbN1) (Azoarcus sp. (strain EbN1)).